We begin with the raw amino-acid sequence, 249 residues long: 14-3-3-like protein D (249 aa).

Belongs to the 14-3-3 family.

In Nicotiana tabacum (Common tobacco), this protein is 14-3-3-like protein D.